Reading from the N-terminus, the 681-residue chain is NAD(P)H-quinone oxidoreductase chain 5 (681 aa).

A run of 16 helical transmembrane segments spans residues 7–27, 39–59, 89–109, 120–140, 144–164, 188–208, 219–239, 258–278, 289–309, 327–347, 352–372, 395–415, 420–440, 509–529, 558–578, and 660–680; these read LAWL…IGLI, INAV…GALL, IDHL…LVMI, GYVR…GLVI, LVQV…LIGF, GLLL…FGTI, GVLS…GPVA, TPIS…FLVA, VVMN…ATIA, LGYM…FHLM, FKAM…GVVG, ATCF…AGFW, ILGL…ATAG, LTMT…GLLG, FYVM…VASL, and AQFY…VFSL.

Belongs to the complex I subunit 5 family.

The protein resides in the cell membrane. It catalyses the reaction a plastoquinone + NADH + (n+1) H(+)(in) = a plastoquinol + NAD(+) + n H(+)(out). The enzyme catalyses a plastoquinone + NADPH + (n+1) H(+)(in) = a plastoquinol + NADP(+) + n H(+)(out). Its function is as follows. NDH-1 shuttles electrons from NAD(P)H, via FMN and iron-sulfur (Fe-S) centers, to quinones in the respiratory chain. The immediate electron acceptor for the enzyme in this species is believed to be plastoquinone. Couples the redox reaction to proton translocation (for every two electrons transferred, four hydrogen ions are translocated across the cytoplasmic membrane), and thus conserves the redox energy in a proton gradient. The protein is NAD(P)H-quinone oxidoreductase chain 5 (ndhF) of Synechocystis sp. (strain ATCC 27184 / PCC 6803 / Kazusa).